The following is a 147-amino-acid chain: Large ribosomal subunit protein uL13 (147 aa).

Belongs to the universal ribosomal protein uL13 family. Part of the 50S ribosomal subunit.

This protein is one of the early assembly proteins of the 50S ribosomal subunit, although it is not seen to bind rRNA by itself. It is important during the early stages of 50S assembly. This chain is Large ribosomal subunit protein uL13, found in Salinispora arenicola (strain CNS-205).